Consider the following 196-residue polypeptide: VDSEAHLQPAARWVAHGAGEILDGVQTFATLEQALADVDFTVATTARSRARFHYYCTPPELLEQLSERKQWVGQAALVFGREDSGLTNEELALADLLTGVPMQADYPSLNLGQAVMVYCYQLASLMGVNAAPQEAAAPEGQLRALRHRADALLDALEVGDDQKLRDWLHQRLGALPQRDTAMLHTLLHDIEKKLAK.

S-adenosyl-L-methionine is bound by residues 44–46 (TTA), Gly-80, Val-100, and 107–109 (PSL).

This sequence belongs to the class IV-like SAM-binding methyltransferase superfamily. RNA methyltransferase TrmH family.

This is an uncharacterized protein from Serratia marcescens.